Reading from the N-terminus, the 547-residue chain is Chaperonin GroEL (547 aa).

Residues 30-33 (TLGP), Lys51, 87-91 (DGTTT), Gly415, 479-481 (NAA), and Asp495 contribute to the ATP site.

It belongs to the chaperonin (HSP60) family. In terms of assembly, forms a cylinder of 14 subunits composed of two heptameric rings stacked back-to-back. Interacts with the co-chaperonin GroES.

Its subcellular location is the cytoplasm. It carries out the reaction ATP + H2O + a folded polypeptide = ADP + phosphate + an unfolded polypeptide.. Its function is as follows. Together with its co-chaperonin GroES, plays an essential role in assisting protein folding. The GroEL-GroES system forms a nano-cage that allows encapsulation of the non-native substrate proteins and provides a physical environment optimized to promote and accelerate protein folding. This Pseudomonas aeruginosa (strain UCBPP-PA14) protein is Chaperonin GroEL.